Reading from the N-terminus, the 235-residue chain is Large ribosomal subunit protein uL1 (235 aa).

Belongs to the universal ribosomal protein uL1 family. Part of the 50S ribosomal subunit.

Functionally, binds directly to 23S rRNA. The L1 stalk is quite mobile in the ribosome, and is involved in E site tRNA release. Its function is as follows. Protein L1 is also a translational repressor protein, it controls the translation of the L11 operon by binding to its mRNA. The protein is Large ribosomal subunit protein uL1 of Paenarthrobacter aurescens (strain TC1).